We begin with the raw amino-acid sequence, 636 residues long: Sodium-dependent proline transporter (636 aa).

Residues Met-1 to Asp-45 are Cytoplasmic-facing. A Phosphothreonine modification is found at Thr-20. Phosphoserine is present on Ser-22. 3 helical membrane-spanning segments follow: residues Phe-46–Arg-66, Ala-74–Leu-93, and Gly-117–Ile-137. Residues Ala-138–Arg-214 are Extracellular-facing. An N-linked (GlcNAc...) asparagine glycan is attached at Asn-182. 9 helical membrane-spanning segments follow: residues Trp-215–Leu-233, Val-242–Val-259, Ile-295–Tyr-312, Phe-324–Leu-345, Leu-378–Leu-397, Val-425–Thr-443, Ser-459–Ile-479, Ala-500–Val-519, and Leu-538–Val-556. The Cytoplasmic segment spans residues Ala-557–Met-636. Phosphoserine is present on residues Ser-573 and Ser-582. Thr-588 carries the post-translational modification Phosphothreonine. Position 591 is a phosphotyrosine (Tyr-591). Ser-598 and Ser-600 each carry phosphoserine.

It belongs to the sodium:neurotransmitter symporter (SNF) (TC 2.A.22) family. SLC6A7 subfamily. Brain specific (at protein level). Highly expressed in hippocampus, corpus striatum and temporal cortex. Also expressed in frontal cortex, occipital cortex and, at lower levels, in cerebellum and parietal cortex (at protein level).

It localises to the synaptic cell membrane. It catalyses the reaction L-proline(out) + chloride(out) + 2 Na(+)(out) = L-proline(in) + chloride(in) + 2 Na(+)(in). The catalysed reaction is L-pipecolate(out) + chloride(out) + 2 Na(+)(out) = L-pipecolate(in) + chloride(in) + 2 Na(+)(in). Brain specific sodium (and chloride)-dependent proline transporter. Terminates the action of proline by its high affinity sodium-dependent reuptake into presynaptic terminals. In Homo sapiens (Human), this protein is Sodium-dependent proline transporter.